Reading from the N-terminus, the 57-residue chain is Protein new-glue 4 (57 aa).

Positions 1–16 are cleaved as a signal peptide; the sequence is MEWKLLLIVLPWLLVC.

The protein resides in the secreted. This chain is Protein new-glue 4 (ng4), found in Drosophila melanogaster (Fruit fly).